A 179-amino-acid chain; its full sequence is Cytochrome b6-f complex iron-sulfur subunit 1 (179 aa).

A helical membrane pass occupies residues 21 to 43; that stretch reads LLTFGTVTGVALGALYPVVNYFI. The 102-residue stretch at 61-162 folds into the Rieske domain; that stretch reads GNDVSVSKFL…AKTENDKIVL (102 aa). The [2Fe-2S] cluster site is built by Cys108, His110, Cys126, and His129. An intrachain disulfide couples Cys113 to Cys128.

It belongs to the Rieske iron-sulfur protein family. As to quaternary structure, the 4 large subunits of the cytochrome b6-f complex are cytochrome b6, subunit IV (17 kDa polypeptide, PetD), cytochrome f and the Rieske protein, while the 4 small subunits are PetG, PetL, PetM and PetN. The complex functions as a dimer. It depends on [2Fe-2S] cluster as a cofactor.

The protein localises to the cellular thylakoid membrane. It catalyses the reaction 2 oxidized [plastocyanin] + a plastoquinol + 2 H(+)(in) = 2 reduced [plastocyanin] + a plastoquinone + 4 H(+)(out). Its function is as follows. Component of the cytochrome b6-f complex, which mediates electron transfer between photosystem II (PSII) and photosystem I (PSI), cyclic electron flow around PSI, and state transitions. The polypeptide is Cytochrome b6-f complex iron-sulfur subunit 1 (Trichormus variabilis (strain ATCC 29413 / PCC 7937) (Anabaena variabilis)).